The chain runs to 160 residues: MSTLKKPDLSDPQLRAKLAKGMGHNYYGEPAWPNDLLYIFPVVIVGTIALCVGLAVLDPAMIGEPADPFATPLEILPEWYFWPVFQILRVVPNKLLGIVAMASIPLGLMLVPFIESVNKFQNPFRRPVATAVFLFGTAVTLWLGIGATLPIDKSLTFGLF.

Helical transmembrane passes span 36 to 56, 95 to 115, and 131 to 151; these read LLYI…GLAV, LLGI…PFIE, and AVFL…TLPI.

It belongs to the cytochrome b family. PetD subfamily. The 4 large subunits of the cytochrome b6-f complex are cytochrome b6, subunit IV (17 kDa polypeptide, PetD), cytochrome f and the Rieske protein, while the 4 small subunits are PetG, PetL, PetM and PetN. The complex functions as a dimer.

It localises to the cellular thylakoid membrane. Its function is as follows. Component of the cytochrome b6-f complex, which mediates electron transfer between photosystem II (PSII) and photosystem I (PSI), cyclic electron flow around PSI, and state transitions. This is Cytochrome b6-f complex subunit 4 from Trichodesmium erythraeum (strain IMS101).